We begin with the raw amino-acid sequence, 559 residues long: MAAQGFLLIASFLLILLVLAKPLGSGLARLIAAVPLPGVAGVERILWRTLGITDHEMNWRQYLLALLTLNLLGLGILFCLLFWQEWLPLNPQRLPGLSRDLALNTAVSFVTNTNWQAYSGESTLSYFSQMAGLTVQNFLSAATGIAVVFALIRAFTRQNVHTLGNAWQDLVRITLWILFPVALIIALFFIQQGVPQNLSAYQPITTLEGAKQLLPMGPVASQEAIKMLGTNGGGFFNANSSHPFENPTALTNLAQMLAIFLIPAALCFAFGEAAGDRRQGRALLWAMSFIFVVCVAVVMWAEVQGNPHLLAAGADSSVNMEGKETRFGVLASSLFAVVTTAASCGAVNAMHDSFTALGGMVPMWLMQIGEVVFGGVGSGLYGMLLFVLLAVFIAGLMIGRTPEYLGKKIDVREMKMTALAILVTPMLVLLGSALAMMTDAGRSAMLNPGPHGFSEVLYAVSSAANNNGSAFAGLSANSPFWNCLLAFCMFVGRFGVIIPVMAIAGSLVSKKVQPASQGTLATHGALFIGLLIGTVLLVGALTFIPALALGPVAEHFSLP.

13 helical membrane-spanning segments follow: residues 5–25, 27–47, 63–83, 132–152, 170–190, 253–273, 283–303, 327–347, 356–376, 379–399, 416–436, 484–504, and 524–544; these read GFLL…PLGS, LARL…RILW, LLAL…LLFW, GLTV…FALI, LVRI…LFFI, LAQM…FGEA, LLWA…WAEV, FGVL…CGAV, ALGG…FGGV, GLYG…LMIG, MTAL…ALAM, LLAF…MAIA, and GALF…LTFI.

Belongs to the KdpA family. As to quaternary structure, the system is composed of three essential subunits: KdpA, KdpB and KdpC.

Its subcellular location is the cell inner membrane. In terms of biological role, part of the high-affinity ATP-driven potassium transport (or Kdp) system, which catalyzes the hydrolysis of ATP coupled with the electrogenic transport of potassium into the cytoplasm. This subunit binds the periplasmic potassium ions and delivers the ions to the membrane domain of KdpB through an intramembrane tunnel. The chain is Potassium-transporting ATPase potassium-binding subunit from Salmonella dublin (strain CT_02021853).